A 284-amino-acid chain; its full sequence is Bifunctional protein FolD (284 aa).

NADP(+) contacts are provided by residues 166-168 (GAS), serine 191, and isoleucine 232.

Belongs to the tetrahydrofolate dehydrogenase/cyclohydrolase family. In terms of assembly, homodimer.

The enzyme catalyses (6R)-5,10-methylene-5,6,7,8-tetrahydrofolate + NADP(+) = (6R)-5,10-methenyltetrahydrofolate + NADPH. The catalysed reaction is (6R)-5,10-methenyltetrahydrofolate + H2O = (6R)-10-formyltetrahydrofolate + H(+). It participates in one-carbon metabolism; tetrahydrofolate interconversion. In terms of biological role, catalyzes the oxidation of 5,10-methylenetetrahydrofolate to 5,10-methenyltetrahydrofolate and then the hydrolysis of 5,10-methenyltetrahydrofolate to 10-formyltetrahydrofolate. The chain is Bifunctional protein FolD from Neisseria meningitidis serogroup C (strain 053442).